Consider the following 95-residue polypeptide: Small ribosomal subunit protein bS20c (95 aa).

It belongs to the bacterial ribosomal protein bS20 family.

It is found in the plastid. The protein resides in the cyanelle. Its function is as follows. Binds directly to 16S ribosomal RNA. This chain is Small ribosomal subunit protein bS20c (rps20), found in Cyanophora paradoxa.